We begin with the raw amino-acid sequence, 467 residues long: tRNA modification GTPase MnmE (467 aa).

(6S)-5-formyl-5,6,7,8-tetrahydrofolate is bound by residues R27, E89, and R128. Residues 225 to 387 (GISMVIAGRP…LKQAIFTVVT (163 aa)) enclose the TrmE-type G domain. Position 235 (N235) interacts with K(+). GTP contacts are provided by residues 235–240 (NVGKSS), 254–260 (TSIAGTT), 279–282 (DTAG), and 368–370 (SAR). Residue S239 coordinates Mg(2+). T254, I256, and T259 together coordinate K(+). Residue T260 participates in Mg(2+) binding. Position 467 (K467) interacts with (6S)-5-formyl-5,6,7,8-tetrahydrofolate.

Belongs to the TRAFAC class TrmE-Era-EngA-EngB-Septin-like GTPase superfamily. TrmE GTPase family. As to quaternary structure, homodimer. Heterotetramer of two MnmE and two MnmG subunits. K(+) is required as a cofactor.

It is found in the cytoplasm. In terms of biological role, exhibits a very high intrinsic GTPase hydrolysis rate. Involved in the addition of a carboxymethylaminomethyl (cmnm) group at the wobble position (U34) of certain tRNAs, forming tRNA-cmnm(5)s(2)U34. The protein is tRNA modification GTPase MnmE of Desulfotalea psychrophila (strain LSv54 / DSM 12343).